The sequence spans 508 residues: Photosystem II CP47 reaction center protein (508 aa).

6 consecutive transmembrane segments (helical) span residues 21–36, 101–115, 140–156, 203–218, 237–252, and 457–472; these read SVHI…WAGS, IVFS…IWHW, GIHL…FGAF, IAAG…FHLS, VLSS…AFVV, and SFAL…HGSR.

Belongs to the PsbB/PsbC family. PsbB subfamily. PSII is composed of 1 copy each of membrane proteins PsbA, PsbB, PsbC, PsbD, PsbE, PsbF, PsbH, PsbI, PsbJ, PsbK, PsbL, PsbM, PsbT, PsbX, PsbY, PsbZ, Psb30/Ycf12, at least 3 peripheral proteins of the oxygen-evolving complex and a large number of cofactors. It forms dimeric complexes. It depends on Binds multiple chlorophylls. PSII binds additional chlorophylls, carotenoids and specific lipids. as a cofactor.

The protein resides in the plastid. Its subcellular location is the chloroplast thylakoid membrane. Its function is as follows. One of the components of the core complex of photosystem II (PSII). It binds chlorophyll and helps catalyze the primary light-induced photochemical processes of PSII. PSII is a light-driven water:plastoquinone oxidoreductase, using light energy to abstract electrons from H(2)O, generating O(2) and a proton gradient subsequently used for ATP formation. The sequence is that of Photosystem II CP47 reaction center protein from Helianthus annuus (Common sunflower).